Reading from the N-terminus, the 393-residue chain is BEN domain-containing protein 5 (393 aa).

Residues 169–212 (RVLYEELLRSYQQQQQEMKHIQHELERTRKQLVQQAKKLKDYGS) adopt a coiled-coil conformation. One can recognise a BEN domain in the interval 274 to 380 (GSGVWVNEEK…EKIMDINKSC (107 aa)).

In terms of biological role, may act as a transcriptional repressor. This is BEN domain-containing protein 5 (bend5) from Xenopus laevis (African clawed frog).